A 275-amino-acid polypeptide reads, in one-letter code: Large ribosomal subunit protein uL2 (275 aa).

2 disordered regions span residues 36-55 and 224-263; these read GLTGSGGRNNTGRITARRMG and VVMNPIDHPHGGGEGRTSGGRHPVTPWGKPTKGKKTRQNK.

It belongs to the universal ribosomal protein uL2 family. Part of the 50S ribosomal subunit. Forms a bridge to the 30S subunit in the 70S ribosome.

One of the primary rRNA binding proteins. Required for association of the 30S and 50S subunits to form the 70S ribosome, for tRNA binding and peptide bond formation. It has been suggested to have peptidyltransferase activity; this is somewhat controversial. Makes several contacts with the 16S rRNA in the 70S ribosome. In Rhodospirillum centenum (strain ATCC 51521 / SW), this protein is Large ribosomal subunit protein uL2.